Consider the following 104-residue polypeptide: Small ribosomal subunit protein uS10 (104 aa).

This sequence belongs to the universal ribosomal protein uS10 family. In terms of assembly, part of the 30S ribosomal subunit.

Its function is as follows. Involved in the binding of tRNA to the ribosomes. The polypeptide is Small ribosomal subunit protein uS10 (Xanthomonas oryzae pv. oryzae (strain MAFF 311018)).